Reading from the N-terminus, the 181-residue chain is Ribulose bisphosphate carboxylase small subunit, chloroplastic 2 (181 aa).

The transit peptide at 1–54 (MASSMLSSAAVVTSPAQATMVAPFTGLKSSAAFPVTRKANNDITSIASNGGRVS) directs the protein to the chloroplast.

This sequence belongs to the RuBisCO small chain family. Heterohexadecamer of 8 large and 8 small subunits.

It is found in the plastid. It localises to the chloroplast. RuBisCO catalyzes two reactions: the carboxylation of D-ribulose 1,5-bisphosphate, the primary event in carbon dioxide fixation, as well as the oxidative fragmentation of the pentose substrate. Both reactions occur simultaneously and in competition at the same active site. Although the small subunit is not catalytic it is essential for maximal activity. The sequence is that of Ribulose bisphosphate carboxylase small subunit, chloroplastic 2 from Brassica napus (Rape).